The primary structure comprises 473 residues: Phosphatidylserine synthase 1 (473 aa).

Ala2 is subject to N-acetylalanine. The Cytoplasmic portion of the chain corresponds to Ala2 to Asp35. A helical membrane pass occupies residues Phe36–Phe56. Over Ala57 to Gly72 the chain is Lumenal. A helical transmembrane segment spans residues Ile73–Phe93. Over Thr94–Arg102 the chain is Cytoplasmic. A helical transmembrane segment spans residues Met103–Phe123. Residues Glu124–Tyr186 lie on the Lumenal side of the membrane. A helical transmembrane segment spans residues Gly187–Leu207. The Cytoplasmic portion of the chain corresponds to Pro208–Asp216. The helical transmembrane segment at Gln217–Cys237 threads the bilayer. At Arg238–Arg286 the chain is on the lumenal side. A helical transmembrane segment spans residues Val287–Leu307. Residues Lys308–Leu319 are Cytoplasmic-facing. A helical transmembrane segment spans residues Ser320 to Leu342. The Lumenal segment spans residues Thr343 to Trp355. The helical transmembrane segment at Val356–Phe376 threads the bilayer. Topologically, residues Ser377–Tyr383 are cytoplasmic. A helical transmembrane segment spans residues Val384–Trp404. Topologically, residues Tyr405 to Lys473 are lumenal. 4 positions are modified to phosphoserine: Ser417, Ser425, Ser442, and Ser454. The disordered stretch occupies residues Trp430–Lys473. Over residues Ser455 to Ser464 the composition is skewed to basic residues.

Belongs to the phosphatidyl serine synthase family.

The protein resides in the endoplasmic reticulum membrane. It catalyses the reaction a 1,2-diacyl-sn-glycero-3-phosphoethanolamine + L-serine = a 1,2-diacyl-sn-glycero-3-phospho-L-serine + ethanolamine. The enzyme catalyses a 1,2-diacyl-sn-glycero-3-phosphocholine + L-serine = a 1,2-diacyl-sn-glycero-3-phospho-L-serine + choline. It participates in phospholipid metabolism; phosphatidylserine biosynthesis. Its function is as follows. Catalyzes a base-exchange reaction in which the polar head group of phosphatidylethanolamine (PE) or phosphatidylcholine (PC) is replaced by L-serine. Catalyzes mainly the conversion of phosphatidylcholine but also converts, in vitro and to a lesser extent, phosphatidylethanolamine. The sequence is that of Phosphatidylserine synthase 1 (Ptdss1) from Rattus norvegicus (Rat).